A 1726-amino-acid polypeptide reads, in one-letter code: Gag-Pro-Pol polyprotein (1726 aa).

Gly2 carries the N-myristoyl glycine; by host lipid modification. The tract at residues Leu103–Leu148 is disordered. A compositionally biased stretch (pro residues) spans Tyr119 to Ser128. Positions Pro202–Pro205 match the PTAP/PSAP motif motif. The PPXY motif signature appears at Pro208–Tyr211. The PTAP/PSAP motif signature appears at Pro287–Pro290. The CCHC-type zinc-finger motif lies at Ser507 to Gln524. Residues Arg550–Gly570 are disordered. In terms of domain architecture, Peptidase A2 spans Phe734–Ile810. Asp739 functions as the Protease; shared with dimeric partner in the catalytic mechanism. The G-patch domain occupies Pro821 to Pro866. One can recognise a Reverse transcriptase domain in the interval Leu911 to Leu1099. Mg(2+)-binding residues include Asp976, Asp1051, Asp1052, Asp1322, Glu1351, Asp1371, and Asp1436. Residues Ile1313 to Phe1444 enclose the RNase H type-1 domain. The Integrase-type zinc-finger motif lies at Ser1446–Pro1487. Positions 1455, 1459, 1483, and 1486 each coordinate Zn(2+). In terms of domain architecture, Integrase catalytic spans Arg1500 to Arg1659. The Mg(2+) site is built by Asp1511, Asp1568, and Glu1604. The segment at residues Pro1665–Glu1714 is a DNA-binding region (integrase-type).

The protein belongs to the retroviral Pol polyprotein family. In terms of assembly, homodimer. Interacts with the G-patch peptide. As to quaternary structure, interacts with the reverse transcriptase/ribonuclease H. In terms of assembly, homotrimer. It depends on Mg(2+) as a cofactor. Released by autocatalytic processing. The protease can undergo further autoprocessing to yield 2 shorter but enzymatically active forms of 12 kDa and 13 kDa. Post-translationally, myristoylated. Myristoylation of the matrix (MA) domain mediates the transport and binding of Gag polyproteins to the host plasma membrane and is required for the assembly of viral particles. In terms of processing, specific enzymatic cleavages in vivo yield mature proteins.

Its subcellular location is the virion. The enzyme catalyses DNA(n) + a 2'-deoxyribonucleoside 5'-triphosphate = DNA(n+1) + diphosphate. The catalysed reaction is Endonucleolytic cleavage to 5'-phosphomonoester.. It carries out the reaction dUTP + H2O = dUMP + diphosphate + H(+). In terms of biological role, matrix protein. Its function is as follows. Nucleocapsid protein p14: Nucleocapsid protein. Functionally, capsid protein. The aspartyl protease mediates proteolytic cleavages of Gag and Gag-Pol polyproteins during or shortly after the release of the virion from the plasma membrane. Cleavages take place as an ordered, step-wise cascade to yield mature proteins. This process is called maturation. Displays maximal activity during the budding process just prior to particle release from the cell. In terms of biological role, enhances the activity of the reverse transcriptase. May be part of the mature RT. Its function is as follows. RT is a multifunctional enzyme that converts the viral dimeric RNA genome into dsDNA in the cytoplasm, shortly after virus entry into the cell. This enzyme displays a DNA polymerase activity that can copy either DNA or RNA templates, and a ribonuclease H (RNase H) activity that cleaves the RNA strand of RNA-DNA heteroduplexes in a partially processive 3' to 5' endonucleasic mode. Conversion of viral genomic RNA into dsDNA requires many steps. A tRNA binds to the primer-binding site (PBS) situated at the 5' end of the viral RNA. RT uses the 3' end of the tRNA primer to perfom a short round of RNA-dependent minus-strand DNA synthesis. The reading proceeds through the U5 region and ends after the repeated (R) region which is present at both ends of viral RNA. The portion of the RNA-DNA heteroduplex is digested by the RNase H, resulting in a ssDNA product attached to the tRNA primer. This ssDNA/tRNA hybridizes with the identical R region situated at the 3' end of viral RNA. This template exchange, known as minus-strand DNA strong stop transfer, can be either intra- or intermolecular. RT uses the 3' end of this newly synthesized short ssDNA to perfom the RNA-dependent minus-strand DNA synthesis of the whole template. RNase H digests the RNA template except for a polypurine tract (PPT) situated at the 5' end of the genome. It is not clear if both polymerase and RNase H activities are simultaneous. RNase H probably can proceed both in a polymerase-dependent (RNA cut into small fragments by the same RT performing DNA synthesis) and a polymerase-independent mode (cleavage of remaining RNA fragments by free RTs). Secondly, RT performs DNA-directed plus-strand DNA synthesis using the PPT that has not been removed by RNase H as primers. PPT and tRNA primers are then removed by RNase H. The 3' and 5' ssDNA PBS regions hybridize to form a circular dsDNA intermediate. Strand displacement synthesis by RT to the PBS and PPT ends produces a blunt ended, linear dsDNA copy of the viral genome that includes long terminal repeats (LTRs) at both ends. Functionally, catalyzes viral DNA integration into the host chromosome, by performing a series of DNA cutting and joining reactions. This chain is Gag-Pro-Pol polyprotein (pol), found in Ovis aries (Sheep).